An 871-amino-acid chain; its full sequence is Alanine--tRNA ligase (871 aa).

Zn(2+)-binding residues include H563, H567, C665, and H669.

It belongs to the class-II aminoacyl-tRNA synthetase family. The cofactor is Zn(2+).

Its subcellular location is the cytoplasm. It catalyses the reaction tRNA(Ala) + L-alanine + ATP = L-alanyl-tRNA(Ala) + AMP + diphosphate. Catalyzes the attachment of alanine to tRNA(Ala) in a two-step reaction: alanine is first activated by ATP to form Ala-AMP and then transferred to the acceptor end of tRNA(Ala). Also edits incorrectly charged Ser-tRNA(Ala) and Gly-tRNA(Ala) via its editing domain. This is Alanine--tRNA ligase from Christiangramia forsetii (strain DSM 17595 / CGMCC 1.15422 / KT0803) (Gramella forsetii).